A 1078-amino-acid chain; its full sequence is Transmembrane protein 132B (1078 aa).

Topologically, residues 1 to 903 (MFGAASRMDT…LTDLEIGMYA (903 aa)) are extracellular. N-linked (GlcNAc...) asparagine glycans are attached at residues N343, N366, and N381. The segment at 834–887 (RGTPVGQEESTNKSTTPQSPMEGKNKLLKSGGPDAFTSFPTQGKSPDPNNPSDL) is disordered. Polar residues predominate over residues 841–852 (EESTNKSTTPQS). Residues 904-924 (LLCVFCLAILVFLINCVAFAW) form a helical membrane-spanning segment. Residues 925–1078 (KYRHKRFAVS…DYMESLQDQM (154 aa)) lie on the Cytoplasmic side of the membrane.

It belongs to the TMEM132 family.

The protein resides in the membrane. This is Transmembrane protein 132B (TMEM132B) from Homo sapiens (Human).